The following is a 260-amino-acid chain: ATP-dependent zinc metalloprotease FTSH, chloroplastic (260 aa).

Histidine 219 provides a ligand contact to Zn(2+). Residue glutamate 220 is part of the active site. Histidine 223 contributes to the Zn(2+) binding site.

In the N-terminal section; belongs to the AAA ATPase family. It in the C-terminal section; belongs to the peptidase M41 family. It depends on Zn(2+) as a cofactor.

It localises to the plastid. It is found in the chloroplast thylakoid membrane. In terms of biological role, probable ATP-dependent zinc metallopeptidase. The polypeptide is ATP-dependent zinc metalloprotease FTSH, chloroplastic (Helianthus annuus (Common sunflower)).